Consider the following 138-residue polypeptide: Cysteine desulfuration protein SufE (138 aa).

Cys51 serves as the catalytic Cysteine persulfide intermediate.

It belongs to the SufE family. Homodimer. Interacts with SufS.

It localises to the cytoplasm. Its pathway is cofactor biosynthesis; iron-sulfur cluster biosynthesis. Functionally, participates in cysteine desulfuration mediated by SufS. Cysteine desulfuration mobilizes sulfur from L-cysteine to yield L-alanine and constitutes an essential step in sulfur metabolism for biosynthesis of a variety of sulfur-containing biomolecules. Functions as a sulfur acceptor for SufS, by mediating the direct transfer of the sulfur atom from the S-sulfanylcysteine of SufS, an intermediate product of cysteine desulfuration process. In Shigella boydii serotype 18 (strain CDC 3083-94 / BS512), this protein is Cysteine desulfuration protein SufE.